A 113-amino-acid chain; its full sequence is Putative pterin-4-alpha-carbinolamine dehydratase (113 aa).

This sequence belongs to the pterin-4-alpha-carbinolamine dehydratase family.

It carries out the reaction (4aS,6R)-4a-hydroxy-L-erythro-5,6,7,8-tetrahydrobiopterin = (6R)-L-erythro-6,7-dihydrobiopterin + H2O. The sequence is that of Putative pterin-4-alpha-carbinolamine dehydratase from Nitrosomonas eutropha (strain DSM 101675 / C91 / Nm57).